The sequence spans 463 residues: Dopaminechrome tautomerase (463 aa).

This sequence belongs to the major royal jelly protein family.

The protein localises to the secreted. It catalyses the reaction dopaminechrome = 5,6-dihydroxyindole. Its pathway is pigment biosynthesis; melanin biosynthesis. In terms of biological role, catalyzes the conversion of dopaminechrome to 5,6-dihydroxyindole in the eumelanin biosynthetic pathway originating from dopamine. Catalyzes tautomerization of dopaminechrome to 5,6-dihydroxyindole during eumelanin biosynthesis. Acts both dopaminechrome and N-methyl dopaminechrome but not on dopachrome or other aminochromes tested. In Drosophila melanogaster (Fruit fly), this protein is Dopaminechrome tautomerase.